Consider the following 348-residue polypeptide: MAPRTLLLVLSGALALTETWAGSHSLRYFSTAVSRPGRREPQYRYIAVEYVDDTQFLRFDSDAAIPRMEPRAPWVEQEGPQYWERTTGYAKANARTDRVALRKLLLRYNQSEAGSHTLQGMNGCDMGPDGRLLRGYHQHAYDGKDYISLNEDLRSWTAADTVARITQRFYEAEEYAEEFRTYLEGECLELLRRYLENGKETLQRADPPKAHVAHHPISDREATLRCWALGFYPAEITLTWQRDGEEQTQDTELVETRPAGDGTFQKWAAVVVPSGEEQRYTCHVQHEGLPQPLTLRWESSSQPTIPIVGIVAGLAVLAVVVTGAVVAAVMWRRKSSDRNRGSYSQPTM.

An N-terminal signal peptide occupies residues 1–21; that stretch reads MAPRTLLLVLSGALALTETWA. The interval 22–113 is alpha-1; sequence GSHSLRYFST…LLLRYNQSEA (92 aa). Topologically, residues 22-307 are extracellular; the sequence is GSHSLRYFST…ESSSQPTIPI (286 aa). Residue N109 is glycosylated (N-linked (GlcNAc...) asparagine). The tract at residues 114–205 is alpha-2; it reads GSHTLQGMNG…ENGKETLQRA (92 aa). Intrachain disulfides connect C124/C187 and C226/C282. The tract at residues 206 to 297 is alpha-3; the sequence is DPPKAHVAHH…GLPQPLTLRW (92 aa). Residues 208 to 296 enclose the Ig-like C1-type domain; it reads PKAHVAHHPI…EGLPQPLTLR (89 aa). The tract at residues 298–307 is connecting peptide; sequence ESSSQPTIPI. Residues 308 to 331 form a helical membrane-spanning segment; sequence VGIVAGLAVLAVVVTGAVVAAVMW. Topologically, residues 332-348 are cytoplasmic; it reads RRKSSDRNRGSYSQPTM.

Belongs to the MHC class I family. Heterodimer of an alpha chain and a beta chain (beta-2-microglobulin).

Its subcellular location is the membrane. In terms of biological role, involved in the presentation of foreign antigens to the immune system. This is Mamu class I histocompatibility antigen, alpha chain F (Mamu-F) from Macaca mulatta (Rhesus macaque).